A 94-amino-acid chain; its full sequence is RxLR effector protein PITG_15972 (94 aa).

The signal sequence occupies residues 1 to 21 (MRAVYILAMACAATLQASSSA). The RxLR-dEER signature appears at 50-65 (RLLRVEDKEEETEEER).

Belongs to the RxLR effector family.

It localises to the secreted. It is found in the host cytoplasm. The protein localises to the host nucleus. In terms of biological role, effector that enhances P.infestans colonization of Nicotiana benthamiana leaves. The chain is RxLR effector protein PITG_15972 from Phytophthora infestans (strain T30-4) (Potato late blight agent).